The chain runs to 376 residues: Putative 12-oxophytodienoate reductase 2 (376 aa).

Residues 31–33 (PLT), Ala64, and Gln106 contribute to the FMN site. A substrate-binding site is contributed by 178-181 (HGAH). Catalysis depends on Tyr183, which acts as the Proton donor. Residues Arg230, Gly301, and 322 to 323 (GR) each bind FMN.

The protein belongs to the NADH:flavin oxidoreductase/NADH oxidase family. The cofactor is FMN.

In terms of biological role, putative oxophytodienoate reductase that may be involved in the biosynthesis or metabolism of oxylipin signaling molecules. The sequence is that of Putative 12-oxophytodienoate reductase 2 (OPR2) from Oryza sativa subsp. japonica (Rice).